A 555-amino-acid chain; its full sequence is Glucosylglycerate phosphorylase (555 aa).

Catalysis depends on aspartate 231, which acts as the Nucleophile.

It belongs to the glycosyl hydrolase 13 family. Glucosylglycerate phosphorylase subfamily.

The enzyme catalyses (2R)-2-O-(alpha-D-glucopyranosyl)-glycerate + phosphate = (R)-glycerate + alpha-D-glucose 1-phosphate. Its function is as follows. Catalyzes the reversible phosphorolysis of glucosylglycerate into alpha-D-glucose 1-phosphate (Glc1P) and D-glycerate. May be a regulator of intracellular levels of glucosylglycerate, a compatible solute that primarily protects organisms facing salt stress and very specific nutritional constraints. Has a very strict substrate specificity. Cannot catalyze the phosphorolysis of sucrose or synthesize sucrose from Glc1P and D-fructose. This Allomeiothermus silvanus (strain ATCC 700542 / DSM 9946 / NBRC 106475 / NCIMB 13440 / VI-R2) (Thermus silvanus) protein is Glucosylglycerate phosphorylase.